Consider the following 258-residue polypeptide: Glutamate racemase (258 aa).

Residues 11 to 12 and 43 to 44 each bind substrate; these read DS and YG. Residue cysteine 74 is the Proton donor/acceptor of the active site. Residue 75–76 coordinates substrate; the sequence is NT. The active-site Proton donor/acceptor is cysteine 187. Residue 188–189 coordinates substrate; it reads TH.

It belongs to the aspartate/glutamate racemases family.

The catalysed reaction is L-glutamate = D-glutamate. Its pathway is cell wall biogenesis; peptidoglycan biosynthesis. Functionally, provides the (R)-glutamate required for cell wall biosynthesis. The chain is Glutamate racemase from Bifidobacterium adolescentis (strain ATCC 15703 / DSM 20083 / NCTC 11814 / E194a).